Reading from the N-terminus, the 436-residue chain is Serine protease inhibitor A6 (436 aa).

Positions 1 to 16 are cleaved as a signal peptide; it reads MHLLVYLSLFFALALA. Positions 26–60 are disordered; sequence KHRHRHEQQGHHDSAKHGHQKDKQQQEQIKNDEGK. Over residues 32 to 60 the composition is skewed to basic and acidic residues; it reads EQQGHHDSAKHGHQKDKQQQEQIKNDEGK. Residues asparagine 260 and asparagine 289 are each glycosylated (N-linked (GlcNAc...) asparagine).

This sequence belongs to the serpin family. Liver.

The protein localises to the secreted. It is found in the extracellular space. Not yet known. The protein is Serine protease inhibitor A6 (serpina6) of Xenopus laevis (African clawed frog).